The sequence spans 460 residues: ATP synthase subunit beta (460 aa).

150 to 157 (GGAGVGKT) provides a ligand contact to ATP.

The protein belongs to the ATPase alpha/beta chains family. F-type ATPases have 2 components, CF(1) - the catalytic core - and CF(0) - the membrane proton channel. CF(1) has five subunits: alpha(3), beta(3), gamma(1), delta(1), epsilon(1). CF(0) has three main subunits: a(1), b(2) and c(9-12). The alpha and beta chains form an alternating ring which encloses part of the gamma chain. CF(1) is attached to CF(0) by a central stalk formed by the gamma and epsilon chains, while a peripheral stalk is formed by the delta and b chains.

The protein resides in the cell inner membrane. The catalysed reaction is ATP + H2O + 4 H(+)(in) = ADP + phosphate + 5 H(+)(out). Its function is as follows. Produces ATP from ADP in the presence of a proton gradient across the membrane. The catalytic sites are hosted primarily by the beta subunits. In Yersinia pestis bv. Antiqua (strain Angola), this protein is ATP synthase subunit beta.